The primary structure comprises 192 residues: MTLIFIMISAIFVNNFVLSRFLGICPFLGVSKQVETAVGMGVAVTFVMALASAITYVVQYAILDPLSLGYLQTIAFILIIAALVQLVEMIIKKSSPSLYQALGVYLPLITTNCAVLGVALINIQNEYNFIETIFNGVGAALGFTLAIVLFAGIRERLETSAVPKALEGFPIALLTAGLMAIAFLGFSGMKLG.

The next 6 membrane-spanning stretches (helical) occupy residues Ile-4–Ile-24, Val-38–Val-58, Leu-71–Ile-91, Ala-101–Ile-121, Ile-133–Ile-153, and Phe-169–Met-189.

It belongs to the NqrDE/RnfAE family. In terms of assembly, the complex is composed of six subunits: RnfA, RnfB, RnfC, RnfD, RnfE and RnfG.

The protein resides in the cell membrane. It carries out the reaction 2 reduced [2Fe-2S]-[ferredoxin] + Na(+)(in) + NAD(+) + H(+) = 2 oxidized [2Fe-2S]-[ferredoxin] + Na(+)(out) + NADH. Functionally, part of a membrane-bound complex that couples electron transfer with translocation of ions across the membrane. Couples electron transfer from reduced ferredoxin to NAD(+) with electrogenic movement of Na(+) out of the cell. Involved in caffeate respiration. This Acetobacterium woodii (strain ATCC 29683 / DSM 1030 / JCM 2381 / KCTC 1655 / WB1) protein is Na(+)-translocating ferredoxin:NAD(+) oxidoreductase complex subunit A.